Here is an 803-residue protein sequence, read N- to C-terminus: Xylosyltransferase sqv-6 (803 aa).

Over 3–13 (VVGGVNTNYRH) the chain is Cytoplasmic. A helical; Signal-anchor for type II membrane protein membrane pass occupies residues 14–34 (YALVIVLFFFLNVYLLYSAQN). Topologically, residues 35-803 (SVQIRKDEGE…GWDEEARILR (769 aa)) are lumenal. A disulfide bridge links C63 with C91. N-linked (GlcNAc...) asparagine glycans are attached at residues N95, N175, and N224. 3 cysteine pairs are disulfide-bonded: C107-C446, C465-C479, and C467-C477. The 95-residue stretch at 115–209 (IDQRIGCFLD…FNAVEIFRTD (95 aa)) folds into the WSC domain. UDP-alpha-D-xylose is bound by residues D265 and 294–296 (TIW). An N-linked (GlcNAc...) asparagine glycan is attached at N326. 399–400 (DW) contacts UDP-alpha-D-xylose. UDP-alpha-D-xylose is bound by residues S480 and 506–507 (RK). N-linked (GlcNAc...) asparagine glycans are attached at residues N615 and N718. The cysteines at positions 769 and 775 are disulfide-linked.

The protein belongs to the glycosyltransferase 14 family. XylT subfamily. It depends on a divalent metal cation as a cofactor.

Its subcellular location is the endoplasmic reticulum membrane. The protein localises to the golgi apparatus membrane. It carries out the reaction UDP-alpha-D-xylose + L-seryl-[protein] = 3-O-(beta-D-xylosyl)-L-seryl-[protein] + UDP + H(+). Its pathway is glycan metabolism; chondroitin sulfate biosynthesis. It functions in the pathway glycan metabolism; heparan sulfate biosynthesis. Catalyzes the first step in biosynthesis of glycosaminoglycan. Transfers D-xylose from UDP-D-xylose to specific serine residues of the core protein. The chain is Xylosyltransferase sqv-6 from Caenorhabditis briggsae.